A 132-amino-acid chain; its full sequence is MMESVAQEIILSCEINSIERGSLKNLSMVNMSCNGFNVSFDIIDSINIFSQKEKVKVIISKNRPSYSHDDFCGHGYIVTELKDSSLNNGNKYTTIISLYGLLVKIISNKESFLRTSQLNIMDHVYFCVKKNN.

The protein belongs to the archaeal Rpo8 RNA polymerase subunit family. Part of the 13-subunit RNA polymerase complex.

The protein resides in the cytoplasm. It catalyses the reaction RNA(n) + a ribonucleoside 5'-triphosphate = RNA(n+1) + diphosphate. DNA-dependent RNA polymerase (RNAP) catalyzes the transcription of DNA into RNA using the four ribonucleoside triphosphates as substrates. The sequence is that of DNA-directed RNA polymerase subunit Rpo8 from Saccharolobus solfataricus (strain ATCC 35092 / DSM 1617 / JCM 11322 / P2) (Sulfolobus solfataricus).